Here is a 397-residue protein sequence, read N- to C-terminus: Argininosuccinate synthase (397 aa).

8–16 serves as a coordination point for ATP; that stretch reads AYSGGLDTS. L-citrulline-binding residues include tyrosine 86 and serine 91. Glycine 116 lines the ATP pocket. Threonine 118, asparagine 122, and aspartate 123 together coordinate L-aspartate. Position 122 (asparagine 122) interacts with L-citrulline. The L-citrulline site is built by arginine 126, serine 175, serine 184, glutamate 260, and tyrosine 272.

The protein belongs to the argininosuccinate synthase family. Type 1 subfamily. Homotetramer.

Its subcellular location is the cytoplasm. It catalyses the reaction L-citrulline + L-aspartate + ATP = 2-(N(omega)-L-arginino)succinate + AMP + diphosphate + H(+). It functions in the pathway amino-acid biosynthesis; L-arginine biosynthesis; L-arginine from L-ornithine and carbamoyl phosphate: step 2/3. The polypeptide is Argininosuccinate synthase (Clostridium botulinum (strain Okra / Type B1)).